A 110-amino-acid polypeptide reads, in one-letter code: PCNA-associated factor (110 aa).

K15 is covalently cross-linked (Glycyl lysine isopeptide (Lys-Gly) (interchain with G-Cter in ubiquitin)). A D-box motif is present at residues 23-34; sequence RKVLGSSTFVTN. N6-acetyllysine; alternate is present on K24. K24 is covalently cross-linked (Glycyl lysine isopeptide (Lys-Gly) (interchain with G-Cter in ubiquitin); alternate). Position 28 is a phosphoserine (S28). The segment covering 29–39 has biased composition (low complexity); the sequence is STFVTNSSGSS. The segment at 29 to 110 is disordered; that stretch reads STFVTNSSGS…QPDHRDDENE (82 aa). Positions 61-71 match the PIP-box motif; sequence QKGIGEFFRLS. S71 carries the post-translational modification Phosphoserine. Residues 71–80 show a composition bias toward basic and acidic residues; the sequence is SPKDSKKENQ. The KEN box motif lies at 77 to 79; it reads KEN. Positions 84–96 match the Initiation motif motif; the sequence is EAGSSGLGKAKRK.

In terms of assembly, interacts (when monoubiquitinated at Lys-15 and Lys-24) with PCNA. Interacts with isoform 2/p33ING1b of ING1. Interacts with BRCA1. Monoubiquitinated at Lys-15 and Lys-24 during normal S phase, promoting its association with PCNA. Also diubiquitinated at these 2 sites. Following DNA damage, monoubiquitin chains at Lys-15 and Lys-24 are probably extended, leading to disrupt the interaction with PCNA. Polyubiquitinated by the APC/C complex at the mitotic exit, leading to its degradation by the proteasome.

Its subcellular location is the nucleus. It localises to the cytoplasm. The protein localises to the perinuclear region. Functionally, PCNA-binding protein that acts as a regulator of DNA repair during DNA replication. Following DNA damage, the interaction with PCNA is disrupted, facilitating the interaction between monoubiquitinated PCNA and the translesion DNA synthesis DNA polymerase eta (POLH) at stalled replisomes, facilitating the bypass of replication-fork-blocking lesions. Also acts as a regulator of centrosome number. In Rattus norvegicus (Rat), this protein is PCNA-associated factor.